The sequence spans 190 residues: Small ribosomal subunit protein uS4 (190 aa).

The S4 RNA-binding domain occupies 105-181 (RRLQTLVYKL…RKKAKAAEGG (77 aa)). Residues 163–190 (GGGRPGRVRRKKAKAAEGGDGDAEEDEE) form a disordered region. The span at 181 to 190 (GDGDAEEDEE) shows a compositional bias: acidic residues.

The protein belongs to the universal ribosomal protein uS4 family.

This Podospora anserina (Pleurage anserina) protein is Small ribosomal subunit protein uS4 (RPS9).